A 216-amino-acid chain; its full sequence is MSCSIFKDLPEDHPRRLIPALCRQFYHLGWVTGTGGGMSIKLNNEIYIAPSGVQKERMQPEDLFVQDIDGKDLQMPPEIRELKKSQCTPLFMLAYRHRNAGAVIHTHSQHAVMATLLWPGKTFRCTHLEMIKGVYDDADKRYLQYDEQLVVPIIENTPHERDLADSMYAGHDGASRLQCRSGQTPRSECSDYLFSIAVEMKMAGLDPETFVDASKA.

Cys87 contributes to the substrate binding site. His105 and His107 together coordinate Zn(2+). Glu129 functions as the Proton donor/acceptor in the catalytic mechanism.

This sequence belongs to the aldolase class II family. MtnB subfamily. It depends on Zn(2+) as a cofactor.

It localises to the cytoplasm. The enzyme catalyses 5-(methylsulfanyl)-D-ribulose 1-phosphate = 5-methylsulfanyl-2,3-dioxopentyl phosphate + H2O. The protein operates within amino-acid biosynthesis; L-methionine biosynthesis via salvage pathway; L-methionine from S-methyl-5-thio-alpha-D-ribose 1-phosphate: step 2/6. Functionally, catalyzes the dehydration of methylthioribulose-1-phosphate (MTRu-1-P) into 2,3-diketo-5-methylthiopentyl-1-phosphate (DK-MTP-1-P). The protein is Probable methylthioribulose-1-phosphate dehydratase of Drosophila persimilis (Fruit fly).